We begin with the raw amino-acid sequence, 627 residues long: Phosphomethylpyrimidine synthase (627 aa).

Positions 1-24 (MSATQKNNITRLEQLDRQSTQPFP) are enriched in polar residues. The tract at residues 1–29 (MSATQKNNITRLEQLDRQSTQPFPNSRKV) is disordered. Substrate contacts are provided by residues Asn231, Met260, Tyr289, His325, 345-347 (SRG), 386-389 (DGLR), and Glu425. His429 is a binding site for Zn(2+). Tyr452 is a binding site for substrate. His493 contributes to the Zn(2+) binding site. Residues Cys573, Cys576, and Cys581 each contribute to the [4Fe-4S] cluster site.

The protein belongs to the ThiC family. As to quaternary structure, homodimer. The cofactor is [4Fe-4S] cluster.

It carries out the reaction 5-amino-1-(5-phospho-beta-D-ribosyl)imidazole + S-adenosyl-L-methionine = 4-amino-2-methyl-5-(phosphooxymethyl)pyrimidine + CO + 5'-deoxyadenosine + formate + L-methionine + 3 H(+). Its pathway is cofactor biosynthesis; thiamine diphosphate biosynthesis. Its function is as follows. Catalyzes the synthesis of the hydroxymethylpyrimidine phosphate (HMP-P) moiety of thiamine from aminoimidazole ribotide (AIR) in a radical S-adenosyl-L-methionine (SAM)-dependent reaction. The chain is Phosphomethylpyrimidine synthase from Pseudomonas aeruginosa (strain UCBPP-PA14).